Consider the following 546-residue polypeptide: Probable protein kinase UbiB (546 aa).

One can recognise a Protein kinase domain in the interval 124–502 (DFDIKPLASA…RVRQGQSRYL (379 aa)). Residues 130 to 138 (LASASIAQV) and Lys-153 contribute to the ATP site. The active-site Proton acceptor is the Asp-288. 2 helical membrane-spanning segments follow: residues 501-521 (YLFG…INRP) and 522-542 (DWQM…LIGW).

It belongs to the ABC1 family. UbiB subfamily.

Its subcellular location is the cell inner membrane. The protein operates within cofactor biosynthesis; ubiquinone biosynthesis [regulation]. Its function is as follows. Is probably a protein kinase regulator of UbiI activity which is involved in aerobic coenzyme Q (ubiquinone) biosynthesis. The protein is Probable protein kinase UbiB of Enterobacter sp. (strain 638).